The primary structure comprises 298 residues: MIINGVHIDETFAEAFPMRATRVIVTAQNLKWAHHAAQAMTGFATSVIACGCEAGIERELDPAETPDGRPGVSALLFAMGGKGLAKQLETRAGQCVLTSPTSALFAGIVEGEQIPLGKNLRYFGDGFQISKRIGGKRYWRIPVMDGEFLCQETTGMIKAVGGGNFLILAESQPQALAACEAAIEAMRRIPNVIMPFPGGVVRSGSKVGSKYKTLPASTNDAFCPTLKGQTRTELSPEIESVMEIVIDGLSDADIAKAMRAGIEAACGLGAANGIRRISAGNYGGKLGPFLFHLREIMA.

This sequence belongs to the FTR family. Homotetramer.

The protein localises to the cytoplasm. The catalysed reaction is N-formylmethanofuran + 5,6,7,8-tetrahydromethanopterin + H(+) = N(5)-formyl-5,6,7,8-tetrahydromethanopterin + methanofuran. The protein operates within one-carbon metabolism; formaldehyde degradation; formate from formaldehyde (H(4)MPT route): step 4/5. Functionally, catalyzes the transfer of a formyl group from 5-formyl tetrahydromethanopterin (5-formyl-H(4)MPT) to methanofuran (MFR) to produce formylmethanofuran (formyl-MFR) and tetrahydromethanopterin (H(4)MPT). In Methylococcus capsulatus (strain ATCC 33009 / NCIMB 11132 / Bath), this protein is Formylmethanofuran--tetrahydromethanopterin formyltransferase.